We begin with the raw amino-acid sequence, 326 residues long: DNA-directed RNA polymerase subunit alpha (326 aa).

Residues 1–231 form an alpha N-terminal domain (alpha-NTD) region; it reads MQTNLLKPKI…DQLVVFAALE (231 aa). Positions 247 to 326 are alpha C-terminal domain (alpha-CTD); sequence VDPMLMRPVD…ESWPPANLEK (80 aa).

Belongs to the RNA polymerase alpha chain family. As to quaternary structure, homodimer. The RNAP catalytic core consists of 2 alpha, 1 beta, 1 beta' and 1 omega subunit. When a sigma factor is associated with the core the holoenzyme is formed, which can initiate transcription.

It carries out the reaction RNA(n) + a ribonucleoside 5'-triphosphate = RNA(n+1) + diphosphate. In terms of biological role, DNA-dependent RNA polymerase catalyzes the transcription of DNA into RNA using the four ribonucleoside triphosphates as substrates. In Polynucleobacter asymbioticus (strain DSM 18221 / CIP 109841 / QLW-P1DMWA-1) (Polynucleobacter necessarius subsp. asymbioticus), this protein is DNA-directed RNA polymerase subunit alpha.